A 662-amino-acid polypeptide reads, in one-letter code: Probable quinol oxidase subunit 1 (662 aa).

Helical transmembrane passes span 14-34 and 58-78; these read WMIT…IAVI and IMYL…ALLI. His-102 contacts Fe(II)-heme a. A run of 8 helical transmembrane segments spans residues 103–123, 140–160, 187–207, 228–248, 273–293, 311–331, 336–356, and 376–396; these read GVIM…NIVV, VSFW…IIGG, IAIQ…FVTI, FITT…LALM, FFWV…FGIY, MVWA…HHFF, GALI…PTGV, and MLFS…GVML. Residues His-279, Tyr-283, His-328, and His-329 each coordinate Cu cation. Positions 279 to 283 form a cross-link, 1'-histidyl-3'-tyrosine (His-Tyr); it reads HPEVY. Heme a3 is bound at residue His-414. Helical transmembrane passes span 415–435, 451–471, 493–513, 587–604, and 608–627; these read FHYT…IFWY, CFWF…ILGL, ISTI…VSIV, PVGF…FFLI, and VIPA…YRSF. His-416 is a Fe(II)-heme a binding site.

This sequence belongs to the heme-copper respiratory oxidase family. It depends on Cu cation as a cofactor. Requires ferriheme a as cofactor. Heme A3. serves as cofactor.

It localises to the cell membrane. It carries out the reaction 2 a quinol + O2 = 2 a quinone + 2 H2O. Its pathway is energy metabolism; oxidative phosphorylation. Functionally, catalyzes quinol oxidation with the concomitant reduction of oxygen to water. This Staphylococcus aureus (strain MRSA252) protein is Probable quinol oxidase subunit 1 (qoxB).